The following is a 77-amino-acid chain: Putative membrane protein insertion efficiency factor (77 aa).

It belongs to the UPF0161 family.

The protein localises to the cell membrane. In terms of biological role, could be involved in insertion of integral membrane proteins into the membrane. In Geobacillus sp. (strain WCH70), this protein is Putative membrane protein insertion efficiency factor.